A 446-amino-acid chain; its full sequence is Argininosuccinate synthase (446 aa).

ATP contacts are provided by residues 17-25 and Ala43; that span reads AFSGGLDTS. Position 99 (Tyr99) interacts with L-citrulline. ATP is bound by residues Gly129 and Thr131. Residues Thr131, Asn135, and Asp136 each coordinate L-aspartate. Position 135 (Asn135) interacts with L-citrulline. Asp136 provides a ligand contact to ATP. L-citrulline is bound by residues Arg139 and Ser192. Asp194 contributes to the ATP binding site. L-citrulline is bound by residues Thr201, Glu203, and Glu280.

This sequence belongs to the argininosuccinate synthase family. Type 2 subfamily. Homotetramer.

Its subcellular location is the cytoplasm. It carries out the reaction L-citrulline + L-aspartate + ATP = 2-(N(omega)-L-arginino)succinate + AMP + diphosphate + H(+). It functions in the pathway amino-acid biosynthesis; L-arginine biosynthesis; L-arginine from L-ornithine and carbamoyl phosphate: step 2/3. This is Argininosuccinate synthase from Methylibium petroleiphilum (strain ATCC BAA-1232 / LMG 22953 / PM1).